We begin with the raw amino-acid sequence, 1431 residues long: DNA-directed RNA polymerase subunit beta' (1431 aa).

Residues Cys-66, Cys-68, Cys-81, and Cys-84 each contribute to the Zn(2+) site. Mg(2+) is bound by residues Asp-470, Asp-472, and Asp-474. Residues Cys-813, Cys-887, Cys-894, and Cys-897 each coordinate Zn(2+).

Belongs to the RNA polymerase beta' chain family. The RNAP catalytic core consists of 2 alpha, 1 beta, 1 beta' and 1 omega subunit. When a sigma factor is associated with the core the holoenzyme is formed, which can initiate transcription. Mg(2+) serves as cofactor. It depends on Zn(2+) as a cofactor.

The catalysed reaction is RNA(n) + a ribonucleoside 5'-triphosphate = RNA(n+1) + diphosphate. In terms of biological role, DNA-dependent RNA polymerase catalyzes the transcription of DNA into RNA using the four ribonucleoside triphosphates as substrates. The polypeptide is DNA-directed RNA polymerase subunit beta' (Parabacteroides distasonis (strain ATCC 8503 / DSM 20701 / CIP 104284 / JCM 5825 / NCTC 11152)).